Reading from the N-terminus, the 43-residue chain is Protein PsbN (43 aa).

The chain crosses the membrane as a helical span at residues 5–25; it reads LILSIFIFSLLLGITSYSIYI.

Belongs to the PsbN family.

The protein resides in the plastid. It is found in the chloroplast thylakoid membrane. May play a role in photosystem I and II biogenesis. In Cyanidium caldarium (Red alga), this protein is Protein PsbN.